Here is a 553-residue protein sequence, read N- to C-terminus: Dihydroxy-acid dehydratase (553 aa).

Asp78 lines the Mg(2+) pocket. Residue Cys119 participates in [2Fe-2S] cluster binding. Residues Asp120 and Lys121 each coordinate Mg(2+). N6-carboxylysine is present on Lys121. Cys191 provides a ligand contact to [2Fe-2S] cluster. Mg(2+) is bound at residue Glu444. Residue Ser470 is the Proton acceptor of the active site.

It belongs to the IlvD/Edd family. In terms of assembly, homodimer. The cofactor is [2Fe-2S] cluster. It depends on Mg(2+) as a cofactor.

The enzyme catalyses (2R)-2,3-dihydroxy-3-methylbutanoate = 3-methyl-2-oxobutanoate + H2O. It catalyses the reaction (2R,3R)-2,3-dihydroxy-3-methylpentanoate = (S)-3-methyl-2-oxopentanoate + H2O. It participates in amino-acid biosynthesis; L-isoleucine biosynthesis; L-isoleucine from 2-oxobutanoate: step 3/4. Its pathway is amino-acid biosynthesis; L-valine biosynthesis; L-valine from pyruvate: step 3/4. Functionally, functions in the biosynthesis of branched-chain amino acids. Catalyzes the dehydration of (2R,3R)-2,3-dihydroxy-3-methylpentanoate (2,3-dihydroxy-3-methylvalerate) into 2-oxo-3-methylpentanoate (2-oxo-3-methylvalerate) and of (2R)-2,3-dihydroxy-3-methylbutanoate (2,3-dihydroxyisovalerate) into 2-oxo-3-methylbutanoate (2-oxoisovalerate), the penultimate precursor to L-isoleucine and L-valine, respectively. This chain is Dihydroxy-acid dehydratase, found in Methanosarcina barkeri (strain Fusaro / DSM 804).